The following is a 44-amino-acid chain: MRDLKTYLSVAPVISTLWFGSLAGLLIEINRFFPDALTFPFFSF.

The chain crosses the membrane as a helical span at residues 7–27 (YLSVAPVISTLWFGSLAGLLI).

The protein belongs to the PsaJ family.

It is found in the plastid. Its subcellular location is the chloroplast thylakoid membrane. Its function is as follows. May help in the organization of the PsaE and PsaF subunits. This Populus alba (White poplar) protein is Photosystem I reaction center subunit IX.